Reading from the N-terminus, the 509-residue chain is 2-isopropylmalate synthase (509 aa).

A Pyruvate carboxyltransferase domain is found at 5 to 267; sequence IQIFDTTLRD…QTALNLEETK (263 aa). Mn(2+) contacts are provided by aspartate 14, histidine 202, histidine 204, and asparagine 238. The tract at residues 391 to 509 is regulatory domain; that stretch reads KLETLQLQYV…AAENVEKVGN (119 aa).

It belongs to the alpha-IPM synthase/homocitrate synthase family. LeuA type 1 subfamily. As to quaternary structure, homodimer. Requires Mn(2+) as cofactor.

The protein localises to the cytoplasm. It catalyses the reaction 3-methyl-2-oxobutanoate + acetyl-CoA + H2O = (2S)-2-isopropylmalate + CoA + H(+). It functions in the pathway amino-acid biosynthesis; L-leucine biosynthesis; L-leucine from 3-methyl-2-oxobutanoate: step 1/4. Its function is as follows. Catalyzes the condensation of the acetyl group of acetyl-CoA with 3-methyl-2-oxobutanoate (2-ketoisovalerate) to form 3-carboxy-3-hydroxy-4-methylpentanoate (2-isopropylmalate). The chain is 2-isopropylmalate synthase from Staphylococcus aureus (strain MW2).